Reading from the N-terminus, the 121-residue chain is Putative SNURF-like protein (121 aa).

This sequence belongs to the SNURF family.

The sequence is that of Putative SNURF-like protein (SNURFL) from Homo sapiens (Human).